The primary structure comprises 231 residues: 7-cyano-7-deazaguanine synthase (231 aa).

An ATP-binding site is contributed by 8-18 (FSGGQDSTTCL). Zn(2+) is bound by residues C188, C197, C200, and C203.

It belongs to the QueC family. It depends on Zn(2+) as a cofactor.

It carries out the reaction 7-carboxy-7-deazaguanine + NH4(+) + ATP = 7-cyano-7-deazaguanine + ADP + phosphate + H2O + H(+). It participates in purine metabolism; 7-cyano-7-deazaguanine biosynthesis. Its function is as follows. Catalyzes the ATP-dependent conversion of 7-carboxy-7-deazaguanine (CDG) to 7-cyano-7-deazaguanine (preQ(0)). The chain is 7-cyano-7-deazaguanine synthase from Escherichia coli O157:H7.